Reading from the N-terminus, the 434-residue chain is Chaperone SurA (434 aa).

The first 22 residues, 1–22, serve as a signal peptide directing secretion; that stretch reads MKPSKHLIFALFALAISQPTMA. PpiC domains lie at 173–274 and 283–383; these read DVEY…KIMD and IEEV…QLEE.

It is found in the periplasm. It catalyses the reaction [protein]-peptidylproline (omega=180) = [protein]-peptidylproline (omega=0). Its function is as follows. Chaperone involved in the correct folding and assembly of outer membrane proteins. Recognizes specific patterns of aromatic residues and the orientation of their side chains, which are found more frequently in integral outer membrane proteins. May act in both early periplasmic and late outer membrane-associated steps of protein maturation. The sequence is that of Chaperone SurA from Shewanella oneidensis (strain ATCC 700550 / JCM 31522 / CIP 106686 / LMG 19005 / NCIMB 14063 / MR-1).